Reading from the N-terminus, the 185-residue chain is Ribosome-recycling factor (185 aa).

This sequence belongs to the RRF family.

Its subcellular location is the cytoplasm. Its function is as follows. Responsible for the release of ribosomes from messenger RNA at the termination of protein biosynthesis. May increase the efficiency of translation by recycling ribosomes from one round of translation to another. This is Ribosome-recycling factor from Pseudomonas fluorescens (strain SBW25).